The sequence spans 453 residues: Na(+)/H(+) antiporter NhaA (453 aa).

The next 11 helical transmembrane spans lie at 22–42, 72–92, 108–128, 137–157, 166–186, 189–209, 218–238, 316–336, 343–363, 386–406, and 424–444; these read ASLL…SPWA, MLAF…GLEI, LLPI…YMLV, GAAI…GLLG, IFLT…IALF, GHIA…LYVG, LFFY…GIHP, PLVN…VTFG, LVNV…LGIF, LFGV…IANL, and LGVF…LKWV.

The protein belongs to the NhaA Na(+)/H(+) (TC 2.A.33) antiporter family.

Its subcellular location is the cell inner membrane. The enzyme catalyses Na(+)(in) + 2 H(+)(out) = Na(+)(out) + 2 H(+)(in). In terms of biological role, na(+)/H(+) antiporter that extrudes sodium in exchange for external protons. This chain is Na(+)/H(+) antiporter NhaA, found in Parabacteroides distasonis (strain ATCC 8503 / DSM 20701 / CIP 104284 / JCM 5825 / NCTC 11152).